The sequence spans 497 residues: MDATTGPVHYHKLQLWEPGVESEEEEEEEEEEIAEPLVLSLRRLQNTPRNEVGGLPGAWARLLAGLLLLAVSSSLALRQLHSRDSPRGNLGSVAPPASRHSHRPGVYHHSAIISPAATCSQLGQELLVAGGNVVDAGVGAALCLAVVHPHATGLGATFWGLFYNSSSGNSTALTAGPTQLLAPGLGLPTGLPALHLLHAHFGRLPWPHLLTKPAMLAEKGFEVDAPLANALAIQGTKGLCPLFCHTNGTPLGLGARATNPNLAAVLRSAALASSPDLAGKALLNPLVRDLGLELPSAQPVPSLEPALQLLLPRGVLFTTPGPSAGPELVELLESTLHSRTPSSAPCPPFLQTAETPVSSALATVDSNGSMLLLISSINSSFGSGHLSPSTGVLLSNLEASPAPSAWACPLILRDNLDDTEADMLGMVASGISRGAKAMTCTLLNHLATPQIPQQPQHQRPTESPGICGQGALLQAVVHAEHAHVSSVPSGCCPFQGY.

The segment at 1–34 is disordered; it reads MDATTGPVHYHKLQLWEPGVESEEEEEEEEEEIA. Topologically, residues 1 to 51 are cytoplasmic; sequence MDATTGPVHYHKLQLWEPGVESEEEEEEEEEEIAEPLVLSLRRLQNTPRNE. Acidic residues predominate over residues 20-34; that stretch reads VESEEEEEEEEEEIA. The helical; Signal-anchor for type II membrane protein transmembrane segment at 52–72 threads the bilayer; the sequence is VGGLPGAWARLLAGLLLLAVS. The Extracellular portion of the chain corresponds to 73-497; sequence SSLALRQLHS…PSGCCPFQGY (425 aa). N-linked (GlcNAc...) asparagine glycosylation is found at Asn164, Asn169, Asn367, and Asn378.

It belongs to the gamma-glutamyltransferase family. In terms of assembly, heterodimer composed of the light and heavy chains. The active site is located in the light chain. In terms of processing, cleaved by autocatalysis into a large and a small subunit and the autocatalytic cleavage is essential to the functional activation of the enzyme.

The protein resides in the membrane. The catalysed reaction is an N-terminal (5-L-glutamyl)-[peptide] + an alpha-amino acid = 5-L-glutamyl amino acid + an N-terminal L-alpha-aminoacyl-[peptide]. The enzyme catalyses glutathione + H2O = L-cysteinylglycine + L-glutamate. It catalyses the reaction an S-substituted glutathione + H2O = an S-substituted L-cysteinylglycine + L-glutamate. It functions in the pathway sulfur metabolism; glutathione metabolism. Its function is as follows. Hydrolyzes and transfers gamma-glutamyl moieties from glutathione and other gamma-glutamyl compounds to acceptors. This is Glutathione hydrolase 6 from Mus musculus (Mouse).